The following is a 1176-amino-acid chain: Pesticidal crystal protein Cry1Ag (1176 aa).

It belongs to the delta endotoxin family.

Promotes colloidosmotic lysis by binding to the midgut epithelial cells of many lepidopteran larvae. The sequence is that of Pesticidal crystal protein Cry1Ag (cry1Ag) from Bacillus thuringiensis.